A 206-amino-acid chain; its full sequence is GCN5-like protein acetyltransferase Rv2170 (206 aa).

The N-acetyltransferase domain occupies 44–205 (EHIRRRGWQA…AFAILGRTLP (162 aa)). The active-site Proton donor is tyrosine 176.

Belongs to the acetyltransferase family.

It catalyses the reaction L-lysyl-[protein] + acetyl-CoA = N(6)-acetyl-L-lysyl-[protein] + CoA + H(+). The catalysed reaction is propanoyl-CoA + L-lysyl-[protein] = N(6)-propanoyl-L-lysyl-[protein] + CoA + H(+). The enzyme catalyses succinyl-CoA + L-lysyl-[protein] = N(6)-succinyl-L-lysyl-[protein] + CoA + H(+). Functionally, acetyltransferase involved in the post-translational regulation of the central metabolic enzyme isocitrate dehydrogenase 1 (ICDH-1) through lysine acetylation. Catalyzes the acetylation of ICDH-1 at Lys-30 and Lys-129, using acetyl-CoA as a donor, leading to a reduction of ICDH-1 enzyme activity. Can also use propionyl-CoA and succinyl-CoA as donors. Cannot act on the isocitrate dehydrogenase 2 (ICDH-2). Might play a role in regulating the TCA cycle and methylcitrate cycle when M.tuberculosis utilizes fatty acid as carbon source. Its function is as follows. In addition, it can acetylate the amino group of isoniazid (INH), one of the first-line drugs used for the treatment of tuberculosis, thereby canceling out the drug toxicity. Acts by catalyzing the transfer of an acetyl group from acetyl-CoA to INH. Following acetylation, INH is broken down into isonicotinic acid and acetylhydrazine. M.smegmatis and M.tuberculosis H37Ra strains overexpressing Rv2170 are resistant to INH. Has little or no acetyltransferase activity with other antibiotics such as streptomycin, neomycin, kanamycin, amikacin, apramycin and gentamicin. The protein is GCN5-like protein acetyltransferase Rv2170 of Mycobacterium tuberculosis (strain ATCC 25618 / H37Rv).